The primary structure comprises 434 residues: Adenylosuccinate synthetase (434 aa).

GTP-binding positions include 22–28 (GDEGKGK) and 50–52 (GHT). The active-site Proton acceptor is the Asp23. Positions 23 and 50 each coordinate Mg(2+). IMP-binding positions include 23–26 (DEGK), 48–51 (NAGH), Thr139, Arg153, Gln234, Thr249, and Arg313. His51 acts as the Proton donor in catalysis. 309 to 315 (ATTGRKR) contacts substrate. GTP is bound by residues Arg315, 341–343 (KLD), and 423–425 (SVG).

Belongs to the adenylosuccinate synthetase family. Homodimer. Requires Mg(2+) as cofactor.

It localises to the cytoplasm. The catalysed reaction is IMP + L-aspartate + GTP = N(6)-(1,2-dicarboxyethyl)-AMP + GDP + phosphate + 2 H(+). Its pathway is purine metabolism; AMP biosynthesis via de novo pathway; AMP from IMP: step 1/2. Its function is as follows. Plays an important role in the de novo pathway of purine nucleotide biosynthesis. Catalyzes the first committed step in the biosynthesis of AMP from IMP. This is Adenylosuccinate synthetase from Chlorobium chlorochromatii (strain CaD3).